The chain runs to 70 residues: U2-agatoxin-Ao1j (70 aa).

The first 20 residues, Met1–Ala20, serve as a signal peptide directing secretion. Residues Val21 to Arg34 constitute a propeptide that is removed on maturation. 3 cysteine pairs are disulfide-bonded: Cys37–Cys53, Cys44–Cys58, and Cys52–Cys68. Leu69 bears the Leucine amide mark.

This sequence belongs to the neurotoxin 01 (U2-agtx) family. Expressed by the venom gland.

Its subcellular location is the secreted. Its function is as follows. Insect active toxin causing rapid but reversible paralysis in crickets. No activity shown in mammals. Does not show effect on mammalian voltage-gated calcium channels. In Agelena orientalis (Funnel-web spider), this protein is U2-agatoxin-Ao1j.